Reading from the N-terminus, the 354-residue chain is Glycine betaine/proline betaine transport system permease protein ProW (354 aa).

The segment at 1–28 is disordered; the sequence is MADQTNPWDTAQVADTTTQTADAWGTPA. Topologically, residues 1–99 are cytoplasmic; the sequence is MADQTNPWDT…VDYILNGFQQ (99 aa). Positions 9-23 are enriched in low complexity; that stretch reads DTAQVADTTTQTADA. The helical transmembrane segment at 100–120 threads the bilayer; the sequence is LLLGMPAPVAIILFALIAWQV. Residue serine 121 is a topological domain, periplasmic. Residues 122 to 142 form a helical membrane-spanning segment; sequence GVGMGIATLISLIAIGAIGAW. Topologically, residues 143 to 148 are cytoplasmic; sequence SQAMIT. The ABC transmembrane type-1 domain maps to 145–324; the sequence is AMITLALVLT…ILAIILDRLT (180 aa). The helical transmembrane segment at 149–169 threads the bilayer; that stretch reads LALVLTALLFCVVIGLPMGIW. The Periplasmic portion of the chain corresponds to 170–198; sequence LARSPRAAKIVRPLLDAMQTTPAFVYLVP. A helical membrane pass occupies residues 199–219; sequence IVMLFGIGNVPGVVVTIIFAL. Over 220–270 the chain is Cytoplasmic; it reads PPIVRLTILGINQVPADLIEASRSFGASPRQMLFKVQLPLAMPTIMAGVNQ. Residues 271–291 form a helical membrane-spanning segment; sequence TLMLALSMVVIASMIAVGGLG. Topologically, residues 292-300 are periplasmic; the sequence is QMVLRGIGR. The chain crosses the membrane as a helical span at residues 301–321; that stretch reads LDMGLATVGGVGIVILAIILD. Residues 322–354 are Cytoplasmic-facing; that stretch reads RLTQAVGRDSRSRGNRRWYTTGPVGLITRPFVK.

The protein belongs to the binding-protein-dependent transport system permease family. CysTW subfamily. As to quaternary structure, the complex is composed of two ATP-binding proteins (ProV), two transmembrane proteins (ProW) and a solute-binding protein (ProX).

Its subcellular location is the cell inner membrane. Its function is as follows. Part of the ProU ABC transporter complex involved in glycine betaine and proline betaine uptake. Probably responsible for the translocation of the substrate across the membrane. The sequence is that of Glycine betaine/proline betaine transport system permease protein ProW from Salmonella typhimurium (strain LT2 / SGSC1412 / ATCC 700720).